The sequence spans 380 residues: Probable polyglutamine synthesis accessory protein MT0602 (380 aa).

This sequence belongs to the CapA family.

Functionally, could be involved in the biosynthesis, transport or localization of poly-alpha-L-glutamine (PLG), a cell wall component. Contributes to stress tolerance and virulence. In Mycobacterium tuberculosis (strain CDC 1551 / Oshkosh), this protein is Probable polyglutamine synthesis accessory protein MT0602.